Consider the following 207-residue polypeptide: Ribonuclease HII (207 aa).

Residues 12–201 (DLVAGVDEVG…VRAAWEAREG (190 aa)) enclose the RNase H type-2 domain. Residues aspartate 18, glutamate 19, and aspartate 110 each contribute to the a divalent metal cation site.

It belongs to the RNase HII family. Mn(2+) serves as cofactor. Mg(2+) is required as a cofactor.

The protein resides in the cytoplasm. It catalyses the reaction Endonucleolytic cleavage to 5'-phosphomonoester.. In terms of biological role, endonuclease that specifically degrades the RNA of RNA-DNA hybrids. In Pseudomonas putida (strain GB-1), this protein is Ribonuclease HII.